Reading from the N-terminus, the 397-residue chain is tRNA-specific 2-thiouridylase MnmA (397 aa).

Residues 6–13 and leucine 32 each bind ATP; that span reads AMSGGVDS. The active-site Nucleophile is the cysteine 101. Cysteine 101 and cysteine 199 are joined by a disulfide. Glycine 125 contributes to the ATP binding site. An interaction with tRNA region spans residues 148–150; that stretch reads KDQ. The active-site Cysteine persulfide intermediate is the cysteine 199.

This sequence belongs to the MnmA/TRMU family.

Its subcellular location is the cytoplasm. The catalysed reaction is S-sulfanyl-L-cysteinyl-[protein] + uridine(34) in tRNA + AH2 + ATP = 2-thiouridine(34) in tRNA + L-cysteinyl-[protein] + A + AMP + diphosphate + H(+). Functionally, catalyzes the 2-thiolation of uridine at the wobble position (U34) of tRNA, leading to the formation of s(2)U34. The sequence is that of tRNA-specific 2-thiouridylase MnmA from Clavibacter sepedonicus (Clavibacter michiganensis subsp. sepedonicus).